Reading from the N-terminus, the 185-residue chain is MSSSFELSVQDLNDLLSDGSGCYSLPSQPCNEVVPRVYVGNASVAQDITQLQKLGITHVLNAAEGRSFMHVNTSASFYEDSGITYLGIKANDTQEFNLSAYFERATDFIDQALAHKNGRVLVHCREGYSRSPTLVIAYLMMRQKMDVKSALSTVRQNREIGPNDGFLAQLCQLNDRLAKEGKVKL.

The region spanning 28-179 is the Tyrosine-protein phosphatase domain; the sequence is QPCNEVVPRV…LCQLNDRLAK (152 aa). The active-site Phosphocysteine intermediate is the Cys124.

It belongs to the protein-tyrosine phosphatase family. Non-receptor class dual specificity subfamily. Microtubule inner protein component of sperm flagellar doublet microtubules. Interacts with VRK3; this interaction activates DUSP3 phosphatase activity.

It is found in the nucleus. Its subcellular location is the cytoplasm. It localises to the cytoskeleton. The protein resides in the flagellum axoneme. The enzyme catalyses O-phospho-L-tyrosyl-[protein] + H2O = L-tyrosyl-[protein] + phosphate. The catalysed reaction is O-phospho-L-seryl-[protein] + H2O = L-seryl-[protein] + phosphate. It carries out the reaction O-phospho-L-threonyl-[protein] + H2O = L-threonyl-[protein] + phosphate. Shows activity both for tyrosine-protein phosphate and serine-protein phosphate, but displays a strong preference toward phosphotyrosines. Specifically dephosphorylates and inactivates ERK1 and ERK2. This Mus musculus (Mouse) protein is Dual specificity protein phosphatase 3 (Dusp3).